The sequence spans 95 residues: UPF0358 protein GK1077 (95 aa).

Belongs to the UPF0358 family.

The sequence is that of UPF0358 protein GK1077 from Geobacillus kaustophilus (strain HTA426).